Here is a 217-residue protein sequence, read N- to C-terminus: Uracil-DNA glycosylase (217 aa).

The active-site Proton acceptor is Asp62.

This sequence belongs to the uracil-DNA glycosylase (UDG) superfamily. UNG family.

Its subcellular location is the cytoplasm. The catalysed reaction is Hydrolyzes single-stranded DNA or mismatched double-stranded DNA and polynucleotides, releasing free uracil.. Excises uracil residues from the DNA which can arise as a result of misincorporation of dUMP residues by DNA polymerase or due to deamination of cytosine. The chain is Uracil-DNA glycosylase from Streptococcus pyogenes serotype M28 (strain MGAS6180).